We begin with the raw amino-acid sequence, 216 residues long: ATP phosphoribosyltransferase (216 aa).

The protein belongs to the ATP phosphoribosyltransferase family. Short subfamily. In terms of assembly, heteromultimer composed of HisG and HisZ subunits.

It localises to the cytoplasm. It catalyses the reaction 1-(5-phospho-beta-D-ribosyl)-ATP + diphosphate = 5-phospho-alpha-D-ribose 1-diphosphate + ATP. It functions in the pathway amino-acid biosynthesis; L-histidine biosynthesis; L-histidine from 5-phospho-alpha-D-ribose 1-diphosphate: step 1/9. Functionally, catalyzes the condensation of ATP and 5-phosphoribose 1-diphosphate to form N'-(5'-phosphoribosyl)-ATP (PR-ATP). Has a crucial role in the pathway because the rate of histidine biosynthesis seems to be controlled primarily by regulation of HisG enzymatic activity. This is ATP phosphoribosyltransferase from Acidovorax ebreus (strain TPSY) (Diaphorobacter sp. (strain TPSY)).